The chain runs to 339 residues: Methionyl-tRNA formyltransferase (339 aa).

Position 110–113 (110–113 (SLLP)) interacts with (6S)-5,6,7,8-tetrahydrofolate.

It belongs to the Fmt family.

The catalysed reaction is L-methionyl-tRNA(fMet) + (6R)-10-formyltetrahydrofolate = N-formyl-L-methionyl-tRNA(fMet) + (6S)-5,6,7,8-tetrahydrofolate + H(+). In terms of biological role, attaches a formyl group to the free amino group of methionyl-tRNA(fMet). The formyl group appears to play a dual role in the initiator identity of N-formylmethionyl-tRNA by promoting its recognition by IF2 and preventing the misappropriation of this tRNA by the elongation apparatus. This is Methionyl-tRNA formyltransferase from Prochlorococcus marinus (strain MIT 9211).